Consider the following 609-residue polypeptide: Alpha-fetoprotein (609 aa).

An N-terminal signal peptide occupies residues 1 to 18 (MKWVESIFLIFLLNFTES). 3 Albumin domains span residues 19-210 (RTLH…ATVT), 211-402 (KELR…EELQ), and 403-601 (KYIQ…KLIS). H22 is a Cu(2+) binding site. Intrachain disulfides connect C99/C114, C113/C124, C148/C193, C192/C201, C224/C270, C269/C277, C289/C303, and C302/C313. A phosphoserine; by FAM20C mark is found at S111, S115, and S117. N251 carries an N-linked (GlcNAc...) asparagine glycan. A Phosphoserine; by FAM20C modification is found at S344. Intrachain disulfides connect C384-C393, C416-C462, C461-C472, C485-C501, C500-C511, C538-C583, and C582-C591. S444 and S445 each carry phosphoserine; by FAM20C.

It belongs to the ALB/AFP/VDB family. In terms of assembly, dimeric and trimeric forms have been found in addition to the monomeric form. Independent studies suggest heterogeneity of the N-terminal sequence of the mature protein and of the cleavage site of the signal sequence. In terms of processing, sulfated. As to expression, plasma. Synthesized by the fetal liver and yolk sac.

It localises to the secreted. Functionally, binds copper, nickel, and fatty acids as well as, and bilirubin less well than, serum albumin. Only a small percentage (less than 2%) of the human AFP shows estrogen-binding properties. This Homo sapiens (Human) protein is Alpha-fetoprotein (AFP).